The chain runs to 146 residues: MKLHELKAAEGSRRVRNRVGRGAATGNGKTSGRGQKGQKARSGGKLRPGFEGGQLPLFRRLPKRGFTNINRKEYAIVNLDQLNKFEDGTEVTPALLVESGVVKNEKSGIKVLGNGSLDKKLTVKAHKFSASAAEAIDAKGGAHEVI.

A compositionally biased stretch (basic and acidic residues) spans Met1–Arg13. A disordered region spans residues Met1–Pro56. The span at Ala23–Gln35 shows a compositional bias: gly residues.

Belongs to the universal ribosomal protein uL15 family. In terms of assembly, part of the 50S ribosomal subunit.

Functionally, binds to the 23S rRNA. The sequence is that of Large ribosomal subunit protein uL15 from Staphylococcus epidermidis (strain ATCC 35984 / DSM 28319 / BCRC 17069 / CCUG 31568 / BM 3577 / RP62A).